The chain runs to 169 residues: Thaumatin-like pathogenesis-related protein 2 (169 aa).

The first 21 residues, 1–21, serve as a signal peptide directing secretion; sequence MATSSAVLFFLLAVFAAGASA.

Belongs to the thaumatin family.

In terms of biological role, associated with resistance against stem rust fungi. In Avena sativa (Oat), this protein is Thaumatin-like pathogenesis-related protein 2 (RASTL-2).